The chain runs to 410 residues: Serine hydroxymethyltransferase (410 aa).

(6S)-5,6,7,8-tetrahydrofolate-binding positions include Leu-119 and 123–125; that span reads GHL. Position 228 is an N6-(pyridoxal phosphate)lysine (Lys-228). Residue 351–353 coordinates (6S)-5,6,7,8-tetrahydrofolate; the sequence is SPF.

The protein belongs to the SHMT family. In terms of assembly, homodimer. Pyridoxal 5'-phosphate serves as cofactor.

The protein resides in the cytoplasm. It carries out the reaction (6R)-5,10-methylene-5,6,7,8-tetrahydrofolate + glycine + H2O = (6S)-5,6,7,8-tetrahydrofolate + L-serine. It functions in the pathway one-carbon metabolism; tetrahydrofolate interconversion. Its pathway is amino-acid biosynthesis; glycine biosynthesis; glycine from L-serine: step 1/1. Its function is as follows. Catalyzes the reversible interconversion of serine and glycine with tetrahydrofolate (THF) serving as the one-carbon carrier. This reaction serves as the major source of one-carbon groups required for the biosynthesis of purines, thymidylate, methionine, and other important biomolecules. Also exhibits THF-independent aldolase activity toward beta-hydroxyamino acids, producing glycine and aldehydes, via a retro-aldol mechanism. The sequence is that of Serine hydroxymethyltransferase from Clostridium perfringens (strain ATCC 13124 / DSM 756 / JCM 1290 / NCIMB 6125 / NCTC 8237 / Type A).